A 1105-amino-acid polypeptide reads, in one-letter code: uncharacterized protein (1105 aa).

This sequence belongs to the mycobacterial PPE family.

This is an uncharacterized protein from Mycobacterium tuberculosis (strain CDC 1551 / Oshkosh).